Here is a 184-residue protein sequence, read N- to C-terminus: Cytidylate kinase (184 aa).

Position 8–16 (8–16) interacts with ATP; it reads GQPGSGKTT.

The protein belongs to the cytidylate kinase family. Type 2 subfamily.

It localises to the cytoplasm. It carries out the reaction CMP + ATP = CDP + ADP. The catalysed reaction is dCMP + ATP = dCDP + ADP. The polypeptide is Cytidylate kinase (Pyrobaculum islandicum (strain DSM 4184 / JCM 9189 / GEO3)).